The primary structure comprises 324 residues: uncharacterized protein (324 aa).

The next 9 membrane-spanning stretches (helical) occupy residues M34–L54, V76–L96, I103–L123, I127–Y147, P158–I178, G198–S218, Y243–I263, L275–F295, and L297–I317.

It is found in the membrane. This is an uncharacterized protein from Schizosaccharomyces pombe (strain 972 / ATCC 24843) (Fission yeast).